The primary structure comprises 261 residues: CD40 ligand (261 aa).

Residues 1-22 (MIETYSQPSPRSVAAGPPVSMK) lie on the Cytoplasmic side of the membrane. A helical; Signal-anchor for type II membrane protein membrane pass occupies residues 23–43 (IFMYLLTVFLITQMIGSALFA). Over 44–240 (AYLHRRLDKI…LQPGASVFVN (197 aa)) the chain is Extracellular. Residues 122-261 (IAAHVISEAS…GFTSFGLLKL (140 aa)) enclose the THD domain. A disulfide bridge connects residues C178 and C218. A glycan (N-linked (GlcNAc...) asparagine) is linked at N240.

It belongs to the tumor necrosis factor family. As to quaternary structure, homotrimer. Interacts with CD28. CD40 ligand, soluble form: Exists as either a monomer or a homotrimer. Forms a ternary complex between CD40 and integrins for CD40-CD40LG signaling. In terms of processing, the soluble form derives from the membrane form by proteolytic processing.

The protein localises to the cell membrane. Its subcellular location is the cell surface. It localises to the secreted. In terms of biological role, cytokine that acts as a ligand to CD40/TNFRSF5. Costimulates T-cell proliferation and cytokine production. Its cross-linking on T-cells generates a costimulatory signal which enhances the production of IL4 and IL10 in conjunction with the TCR/CD3 ligation and CD28 costimulation. Induces the activation of NF-kappa-B. Induces the activation of kinases MAPK8 and PAK2 in T-cells. Mediates B-cell proliferation in the absence of co-stimulus as well as IgE production in the presence of IL4. Involved in immunoglobulin class switching. Its function is as follows. Acts as a ligand for integrins, specifically ITGA5:ITGB1 and ITGAV:ITGB3; both integrins and the CD40 receptor are required for activation of CD40-CD40LG signaling, which have cell-type dependent effects, such as B-cell activation, NF-kappa-B signaling and anti-apoptotic signaling. This is CD40 ligand (CD40LG) from Sus scrofa (Pig).